Consider the following 338-residue polypeptide: Deoxyhypusine hydroxylase (338 aa).

5 HEAT-like PBS-type repeats span residues 71-97, 104-130, 200-233, 238-264, and 271-298; these read LKHELAYCLGQTRNPDAVAFLQQVLKD, CRHEAAEALGALGYEDSLEILKALKDD, QRYRAMFALRDLASPPDLPTAVQAVDALAKGLKD, FRHEVAFVFGQLCHPASVPSLTECLSN, and VRHEAAEALGSLGDVEGVEDTLKKFLND. 4 residues coordinate Fe cation: histidine 73, glutamate 74, histidine 106, and glutamate 107. Residues histidine 240, glutamate 241, histidine 273, and glutamate 274 each coordinate Fe cation.

It belongs to the deoxyhypusine hydroxylase family. Requires Fe(2+) as cofactor.

The protein resides in the cytoplasm. The protein localises to the nucleus. It catalyses the reaction [eIF5A protein]-deoxyhypusine + AH2 + O2 = [eIF5A protein]-hypusine + A + H2O. It functions in the pathway protein modification; eIF5A hypusination. Its function is as follows. Catalyzes the hydroxylation of the N(6)-(4-aminobutyl)-L-lysine intermediate to form hypusine, an essential post-translational modification only found in mature eIF-5A factor. In Aspergillus niger (strain ATCC MYA-4892 / CBS 513.88 / FGSC A1513), this protein is Deoxyhypusine hydroxylase (lia1).